Reading from the N-terminus, the 92-residue chain is Small ribosomal subunit protein uS19 (92 aa).

Belongs to the universal ribosomal protein uS19 family.

Protein S19 forms a complex with S13 that binds strongly to the 16S ribosomal RNA. The protein is Small ribosomal subunit protein uS19 of Bartonella henselae (strain ATCC 49882 / DSM 28221 / CCUG 30454 / Houston 1) (Rochalimaea henselae).